The primary structure comprises 511 residues: Xylose import ATP-binding protein XylG (511 aa).

ABC transporter domains follow at residues leucine 6–glutamate 244 and phenylalanine 261–proline 506. ATP is bound at residue glycine 38–serine 45.

Belongs to the ABC transporter superfamily. Xylose importer (TC 3.A.1.2.4) family. As to quaternary structure, the complex is composed of two ATP-binding proteins (XylG), two transmembrane proteins (XylH) and a solute-binding protein (XylF).

It localises to the cell inner membrane. It catalyses the reaction D-xylose(out) + ATP + H2O = D-xylose(in) + ADP + phosphate + H(+). Its function is as follows. Part of the ABC transporter complex XylFGH involved in xylose import. Responsible for energy coupling to the transport system. This Brucella suis biovar 1 (strain 1330) protein is Xylose import ATP-binding protein XylG.